A 601-amino-acid chain; its full sequence is Sulfite reductase [NADPH] flavoprotein alpha-component (601 aa).

The 139-residue stretch at 64–202 (ITLISASQTG…AAQEWRARVV (139 aa)) folds into the Flavodoxin-like domain. FMN-binding positions include 70–75 (SQTGNA), 117–120 (STQG), and 153–162 (LGDTSYEFFC). One can recognise an FAD-binding FR-type domain in the interval 236–450 (EAPLSASLAV…IEHNDNFRLP (215 aa)). FAD is bound by residues threonine 324, alanine 358, 388–391 (RLYS), 406–408 (TVG), tyrosine 412, and 421–424 (GGAS). Residues 521–522 (SR), 527–531 (KIYVQ), and aspartate 563 contribute to the NADP(+) site. Tyrosine 601 lines the FAD pocket.

Belongs to the NADPH-dependent sulphite reductase flavoprotein subunit CysJ family. This sequence in the N-terminal section; belongs to the flavodoxin family. It in the C-terminal section; belongs to the flavoprotein pyridine nucleotide cytochrome reductase family. Alpha(8)-beta(8). The alpha component is a flavoprotein, the beta component is a hemoprotein. The cofactor is FAD. FMN serves as cofactor.

It catalyses the reaction hydrogen sulfide + 3 NADP(+) + 3 H2O = sulfite + 3 NADPH + 4 H(+). It participates in sulfur metabolism; hydrogen sulfide biosynthesis; hydrogen sulfide from sulfite (NADPH route): step 1/1. In terms of biological role, component of the sulfite reductase complex that catalyzes the 6-electron reduction of sulfite to sulfide. This is one of several activities required for the biosynthesis of L-cysteine from sulfate. The flavoprotein component catalyzes the electron flow from NADPH -&gt; FAD -&gt; FMN to the hemoprotein component. This chain is Sulfite reductase [NADPH] flavoprotein alpha-component, found in Citrobacter koseri (strain ATCC BAA-895 / CDC 4225-83 / SGSC4696).